The chain runs to 91 residues: Small ribosomal subunit protein uS19 (91 aa).

Belongs to the universal ribosomal protein uS19 family.

In terms of biological role, protein S19 forms a complex with S13 that binds strongly to the 16S ribosomal RNA. The sequence is that of Small ribosomal subunit protein uS19 from Sphingopyxis alaskensis (strain DSM 13593 / LMG 18877 / RB2256) (Sphingomonas alaskensis).